The primary structure comprises 286 residues: Diaminopimelate epimerase (286 aa).

Asn-13 and Asn-66 together coordinate substrate. Catalysis depends on Cys-75, which acts as the Proton donor. Residues 76–77, Asn-165, Asn-198, and 216–217 each bind substrate; these read GN and ER. Cys-225 serves as the catalytic Proton acceptor. Position 226 to 227 (226 to 227) interacts with substrate; sequence GT.

The protein belongs to the diaminopimelate epimerase family. As to quaternary structure, homodimer.

The protein localises to the cytoplasm. It catalyses the reaction (2S,6S)-2,6-diaminopimelate = meso-2,6-diaminopimelate. It participates in amino-acid biosynthesis; L-lysine biosynthesis via DAP pathway; DL-2,6-diaminopimelate from LL-2,6-diaminopimelate: step 1/1. Catalyzes the stereoinversion of LL-2,6-diaminopimelate (L,L-DAP) to meso-diaminopimelate (meso-DAP), a precursor of L-lysine and an essential component of the bacterial peptidoglycan. The protein is Diaminopimelate epimerase of Oceanobacillus iheyensis (strain DSM 14371 / CIP 107618 / JCM 11309 / KCTC 3954 / HTE831).